The chain runs to 96 residues: MIGKEVTLQDIVLELTEPQTVDLHCEEELPEQDTEVEPERRAYKIILCCGGGCGTRLRLFVAATQFGIRGLQDLLLEEVVILCPDCRNSDLQHGGQ.

Residues 1–37 form an E7 terminal domain region; it reads MIGKEVTLQDIVLELTEPQTVDLHCEEELPEQDTEVE. The short motif at 23–27 is the LXCXE motif; interaction with host RB1 and TMEM173/STING element; sequence LHCEE. A zinc finger lies at 49-86; the sequence is CGGGCGTRLRLFVAATQFGIRGLQDLLLEEVVILCPDC. The short motif at 68-76 is the Nuclear export signal element; the sequence is IRGLQDLLL.

This sequence belongs to the papillomaviridae E7 protein family. As to quaternary structure, homodimer. Homooligomer. Interacts with host RB1; this interaction induces dissociation of RB1-E2F1 complex thereby disrupting RB1 activity. Interacts with host EP300; this interaction represses EP300 transcriptional activity. Interacts with protein E2; this interaction inhibits E7 oncogenic activity. Interacts with host TMEM173/STING; this interaction impairs the ability of TMEM173/STING to sense cytosolic DNA and promote the production of type I interferon (IFN-alpha and IFN-beta). Highly phosphorylated.

The protein resides in the host cytoplasm. It localises to the host nucleus. Its function is as follows. Plays a role in viral genome replication by driving entry of quiescent cells into the cell cycle. Stimulation of progression from G1 to S phase allows the virus to efficiently use the cellular DNA replicating machinery to achieve viral genome replication. E7 protein has both transforming and trans-activating activities. Induces the disassembly of the E2F1 transcription factor from RB1, with subsequent transcriptional activation of E2F1-regulated S-phase genes. Interferes with host histone deacetylation mediated by HDAC1 and HDAC2, leading to transcription activation. Also plays a role in the inhibition of both antiviral and antiproliferative functions of host interferon alpha. Interaction with host TMEM173/STING impairs the ability of TMEM173/STING to sense cytosolic DNA and promote the production of type I interferon (IFN-alpha and IFN-beta). The chain is Protein E7 from Homo sapiens (Human).